The primary structure comprises 544 residues: Lysophosphatidylcholine acyltransferase 2 (544 aa).

Residues 1–57 (MSRCAQAAEVAATVPGAGVGNVGLRPPMVPRQASFFPPPVPNPFVQQTQIGSARRVQ) are Cytoplasmic-facing. The helical; Signal-anchor for type II membrane protein transmembrane segment at 58-78 (IVLLGIILLPIRVLLVALILL) threads the bilayer. At 79 to 544 (LAWPFAAIST…EESTSDKKDD (466 aa)) the chain is on the lumenal side. The short motif at 146–151 (HSTFFD) is the HXXXXD motif element. An EGTC motif motif is present at residues 220-223 (EGTC). EF-hand domains lie at 391-426 (PVSDVLRQLFALFDRNHDGSIDFREYVIGLAVLCNP) and 428-463 (NTEEIIQVAFKLFDVDEDGYITEEEFSTILQASLGV). 10 residues coordinate Ca(2+): Asp404, Asn406, Asp408, Ser410, Glu415, Asp441, Asp443, Asp445, Tyr447, and Glu452. Polar residues predominate over residues 518–529 (VQTTPSTASNKV). Positions 518-544 (VQTTPSTASNKVSPEKHEESTSDKKDD) are disordered. The span at 530 to 544 (SPEKHEESTSDKKDD) shows a compositional bias: basic and acidic residues.

The protein belongs to the 1-acyl-sn-glycerol-3-phosphate acyltransferase family.

Its subcellular location is the endoplasmic reticulum membrane. It localises to the golgi apparatus membrane. The protein localises to the cell membrane. It is found in the lipid droplet. It catalyses the reaction a 1-acyl-sn-glycero-3-phosphocholine + an acyl-CoA = a 1,2-diacyl-sn-glycero-3-phosphocholine + CoA. It carries out the reaction a 1-O-alkyl-sn-glycero-3-phosphocholine + acetyl-CoA = a 1-O-alkyl-2-acetyl-sn-glycero-3-phosphocholine + CoA. The enzyme catalyses a 1-acyl-sn-glycero-3-phosphate + an acyl-CoA = a 1,2-diacyl-sn-glycero-3-phosphate + CoA. The catalysed reaction is a 1-O-(1Z-alkenyl)-sn-glycero-3-phosphocholine + an acyl-CoA = a 1-O-(1Z-alkenyl)-2-acyl-sn-glycero-3-phosphocholine + CoA. It catalyses the reaction 1-hexadecanoyl-sn-glycero-3-phosphate + (9Z)-octadecenoyl-CoA = 1-hexadecanoyl-2-(9Z-octadecenoyl)-sn-glycero-3-phosphate + CoA. It carries out the reaction 1-(9Z-octadecenoyl)-sn-glycero-3-phosphate + (9Z)-octadecenoyl-CoA = 1,2-di-(9Z-octadecenoyl)-sn-glycero-3-phosphate + CoA. The enzyme catalyses 1-(9Z-octadecenoyl)-sn-glycero-3-phosphate + hexadecanoyl-CoA = 1-(9Z)-octadecenoyl-2-hexadecanoyl-sn-glycero-3-phosphate + CoA. The catalysed reaction is 1-heptadecanoyl-sn-glycero-3-phosphate + (9Z)-octadecenoyl-CoA = 1-heptadecanoyl-2-(9Z)-octadecenoyl-sn-glycero-3-phosphate + CoA. It catalyses the reaction 1-octadecanoyl-sn-glycero-3-phosphate + (9Z)-octadecenoyl-CoA = 1-octadecanoyl-2-(9Z-octadecenoyl)-sn-glycero-3-phosphate + CoA. It carries out the reaction heptadecanoyl-CoA + 1-(9Z-octadecenoyl)-sn-glycero-3-phosphate = 1-(9Z)-octadecenoyl-2-heptadecanoyl-sn-glycero-3-phosphate + CoA. The enzyme catalyses 1-(9Z-octadecenoyl)-sn-glycero-3-phosphate + (9Z,12Z)-octadecadienoyl-CoA = 1-(9Z)-octadecenoyl-2-(9Z,12Z)-octadecadienoyl-sn-glycero-3-phosphate + CoA. The catalysed reaction is 1-(9Z-octadecenoyl)-sn-glycero-3-phosphate + tetradecanoyl-CoA = 1-(9Z)-octadecenoyl-2-tetradecanoyl-sn-glycero-3-phosphate + CoA. It catalyses the reaction pentadecanoyl-CoA + 1-(9Z-octadecenoyl)-sn-glycero-3-phosphate = 1-(9Z)-octadecenoyl-2-pentadecanoyl-sn-glycero-3-phosphate + CoA. It carries out the reaction nonadecanoyl-CoA + 1-(9Z-octadecenoyl)-sn-glycero-3-phosphate = 1-(9Z)-octadecenoyl-2-nonadecanoyl-sn-glycero-3-phosphate + CoA. The enzyme catalyses 1-hexadecanoyl-sn-glycero-3-phosphocholine + (9Z)-octadecenoyl-CoA = 1-hexadecanoyl-2-(9Z-octadecenoyl)-sn-glycero-3-phosphocholine + CoA. The catalysed reaction is 1-O-hexadecyl-sn-glycero-3-phosphocholine + acetyl-CoA = 1-O-hexadecyl-2-acetyl-sn-glycero-3-phosphocholine + CoA. It catalyses the reaction 1-O-octadecyl-sn-glycero-3-phosphocholine + acetyl-CoA = 1-O-octadecyl-2-acetyl-sn-glycero-3-phosphocholine + CoA. It carries out the reaction 1-hexadecanoyl-sn-glycero-3-phosphocholine + acetyl-CoA = 1-hexadecanoyl-2-acetyl-sn-glycero-3-phosphocholine + CoA. The enzyme catalyses 1-octadecanoyl-sn-glycero-3-phosphocholine + acetyl-CoA = 1-octadecanoyl-2-acetyl-sn-glycero-3-phosphocholine + CoA. The catalysed reaction is a 1-O-(1Z-alkenyl)-sn-glycero-3-phosphocholine + acetyl-CoA = 1-O-(1Z)-alkenyl-2-acetyl-sn-glycero-3-phosphocholine + CoA. It catalyses the reaction 1-O-octadecyl-sn-glycero-3-phosphocholine + (5Z,8Z,11Z,14Z)-eicosatetraenoyl-CoA = 1-O-octadecyl-2-(5Z,8Z,11Z,14Z)-eicosatetraenoyl-sn-glycero-3-phosphocholine + CoA. It functions in the pathway lipid metabolism; phospholipid metabolism. Functionally, exhibits both acyltransferase and acetyltransferase activities. Catalyzes the conversion of lysophosphatidylcholine (1-acyl-sn-glycero-3-phosphocholine or LPC) into phosphatidylcholine (1,2-diacyl-sn-glycero-3-phosphocholine or PC). Catalyzes the conversion 1-acyl-sn-glycerol-3-phosphate (lysophosphatidic acid or LPA) into 1,2-diacyl-sn-glycerol-3-phosphate (phosphatidic acid or PA) by incorporating an acyl moiety at the sn-2 position of the glycerol backbone. Involved in platelet-activating factor (PAF) biosynthesis by catalyzing the conversion of the PAF precursor, 1-O-alkyl-sn-glycero-3-phosphocholine (lyso-PAF) into 1-O-alkyl-2-acetyl-sn-glycero-3-phosphocholine (PAF). Also converts lyso-PAF to 1-O-alkyl-2-acyl-sn-glycero-3-phosphocholine (PC), a major component of cell membranes and a PAF precursor. Under resting conditions, acyltransferase activity is preferred. Upon acute inflammatory stimulus, acetyltransferase activity is enhanced and PAF synthesis increases. Involved in the regulation of lipid droplet number and size. In Homo sapiens (Human), this protein is Lysophosphatidylcholine acyltransferase 2 (LPCAT2).